We begin with the raw amino-acid sequence, 364 residues long: Cobalt-precorrin-5B C(1)-methyltransferase (364 aa).

The protein belongs to the CbiD family.

It carries out the reaction Co-precorrin-5B + S-adenosyl-L-methionine = Co-precorrin-6A + S-adenosyl-L-homocysteine. The protein operates within cofactor biosynthesis; adenosylcobalamin biosynthesis; cob(II)yrinate a,c-diamide from sirohydrochlorin (anaerobic route): step 6/10. In terms of biological role, catalyzes the methylation of C-1 in cobalt-precorrin-5B to form cobalt-precorrin-6A. The sequence is that of Cobalt-precorrin-5B C(1)-methyltransferase from Thermoplasma acidophilum (strain ATCC 25905 / DSM 1728 / JCM 9062 / NBRC 15155 / AMRC-C165).